Consider the following 750-residue polypeptide: Photosystem I P700 chlorophyll a apoprotein A1 (750 aa).

Transmembrane regions (helical) follow at residues 70–93 (VFSA…FHGA), 156–179 (LYCT…FHYH), 195–219 (LNHH…HVSL), 291–309 (IAHH…GHMY), 346–369 (WHAQ…HHMY), 385–411 (LSLF…IFMV), 433–455 (AIIS…LYIH), and 531–549 (FLVH…LILL). Cys-573 and Cys-582 together coordinate [4Fe-4S] cluster. The next 2 membrane-spanning stretches (helical) occupy residues 589–610 (HVFL…HFSW) and 664–686 (LSAY…MFLF). Residue His-675 coordinates chlorophyll a'. The chlorophyll a site is built by Met-683 and Tyr-691. Trp-692 contributes to the phylloquinone binding site. Residues 724 to 744 (AVGVTHYLLGGIATTWAFFLA) form a helical membrane-spanning segment.

This sequence belongs to the PsaA/PsaB family. As to quaternary structure, the PsaA/B heterodimer binds the P700 chlorophyll special pair and subsequent electron acceptors. PSI consists of a core antenna complex that captures photons, and an electron transfer chain that converts photonic excitation into a charge separation. The eukaryotic PSI reaction center is composed of at least 11 subunits. It depends on P700 is a chlorophyll a/chlorophyll a' dimer, A0 is one or more chlorophyll a, A1 is one or both phylloquinones and FX is a shared 4Fe-4S iron-sulfur center. as a cofactor.

Its subcellular location is the plastid. The protein localises to the chloroplast thylakoid membrane. The catalysed reaction is reduced [plastocyanin] + hnu + oxidized [2Fe-2S]-[ferredoxin] = oxidized [plastocyanin] + reduced [2Fe-2S]-[ferredoxin]. In terms of biological role, psaA and PsaB bind P700, the primary electron donor of photosystem I (PSI), as well as the electron acceptors A0, A1 and FX. PSI is a plastocyanin-ferredoxin oxidoreductase, converting photonic excitation into a charge separation, which transfers an electron from the donor P700 chlorophyll pair to the spectroscopically characterized acceptors A0, A1, FX, FA and FB in turn. Oxidized P700 is reduced on the lumenal side of the thylakoid membrane by plastocyanin. The polypeptide is Photosystem I P700 chlorophyll a apoprotein A1 (Aethionema grandiflorum (Persian stone-cress)).